A 162-amino-acid chain; its full sequence is MAELIIVYFSSKSNNTHRFVQKLGLPAQRIPVDNRPLEVSTHYLLIVPTYAAGGSDAKGAVSKQVIRFLNNPNNRKHCKGVISSGNTNFGDTFALAGPIISQKLQVPLLHQFELLGTATDVKKVQAIFARLKHHTHDKQKQTNNLITERTHPCHKPMRHTSH.

It belongs to the NrdI family.

Its function is as follows. Probably involved in ribonucleotide reductase function. The chain is Protein NrdI from Streptococcus pyogenes serotype M1.